The following is a 485-amino-acid chain: Cysteine--tRNA ligase (485 aa).

Cys-27 is a binding site for Zn(2+). The short motif at 29 to 39 (ITAYDLCHIGH) is the 'HIGH' region element. Zn(2+)-binding residues include Cys-208, His-233, and Glu-237. The 'KMSKS' region signature appears at 265–269 (KMSKS). Lys-268 is a binding site for ATP.

The protein belongs to the class-I aminoacyl-tRNA synthetase family. In terms of assembly, monomer. It depends on Zn(2+) as a cofactor.

Its subcellular location is the cytoplasm. The enzyme catalyses tRNA(Cys) + L-cysteine + ATP = L-cysteinyl-tRNA(Cys) + AMP + diphosphate. The protein is Cysteine--tRNA ligase of Nitratidesulfovibrio vulgaris (strain DSM 19637 / Miyazaki F) (Desulfovibrio vulgaris).